Reading from the N-terminus, the 461-residue chain is MLHIHNTLTRRKEAFVPIAPGKVRMYVCGMTVYDYCHLGHARVMVVFDMVARWLRASGFELTYVRNITDIDDKIIRRAGEKGESIRTLTDRFIAAMHEDADALGVLRPDHEPRATEYVMQMQSLIGRLRDKGLAYVAGNRDVCYSVRKFDSYGRFSGKSLDELRAGERVEVAGDKQDPLDFVLWKHARTDEPDEVKWASPWGAGRPGWHIECSAMSSDLLGEQFDIHGGGQDLQFPHHENEIAQSEGAHGHTFVNYWMHNGFVRVDDEKMSKSLGNFFTIRDVLERFDPEVVRFFILRAHYRSPLNYSDAHLEDARQALTRLYTALRNVQPSDAQVDWDEPHAMRFRAAMDDDFNTAEAVAVLFELANEANRSGSAATAAQLKGLGGVLGLLAREPASFLQGRMAGEPDKGEGVAIESMIERRALAKKSKDYAEADRIRAQLLASGIVLEDTPHGTVWRRA.

Cys28 is a binding site for Zn(2+). Positions 30–40 match the 'HIGH' region motif; the sequence is MTVYDYCHLGH. Residues Cys212, His237, and Glu241 each contribute to the Zn(2+) site. The short motif at 269 to 273 is the 'KMSKS' region element; that stretch reads KMSKS. Lys272 contributes to the ATP binding site.

Belongs to the class-I aminoacyl-tRNA synthetase family. In terms of assembly, monomer. Requires Zn(2+) as cofactor.

The protein resides in the cytoplasm. It carries out the reaction tRNA(Cys) + L-cysteine + ATP = L-cysteinyl-tRNA(Cys) + AMP + diphosphate. This is Cysteine--tRNA ligase from Aromatoleum aromaticum (strain DSM 19018 / LMG 30748 / EbN1) (Azoarcus sp. (strain EbN1)).